The chain runs to 113 residues: Kita-kyushu lung cancer antigen 1 (113 aa).

Over 1–3 the chain is Cytoplasmic; sequence MNF. Residues 4–21 traverse the membrane as a helical; Signal-anchor for type II membrane protein segment; it reads YLLLASSILCALIVFWKY. The Extracellular portion of the chain corresponds to 22-113; sequence RRFQRNTGEM…RGASPHRKST (92 aa). The N-linked (GlcNAc...) asparagine glycan is linked to asparagine 83.

In terms of tissue distribution, specifically expressed in testis. Expressed by cancer cell lines.

The protein resides in the cell membrane. The chain is Kita-kyushu lung cancer antigen 1 (CT83) from Homo sapiens (Human).